A 100-amino-acid polypeptide reads, in one-letter code: Omega-hexatoxin-Asp2b (100 aa).

A signal peptide spans 1–23; it reads MKFSKLSITLAVILTQAVFVLCG. A propeptide spanning residues 24–55 is cleaved from the precursor; the sequence is MKNEDFMEKGLESNELHDAIKKPVNSGKPDTE. 3 disulfide bridges follow: cysteine 60–cysteine 73, cysteine 66–cysteine 79, and cysteine 72–cysteine 84.

It belongs to the neurotoxin 15 family. 02 (omega-actx) subfamily. As to expression, expressed by the venom gland.

It is found in the secreted. Potent inhibitor of insect, but not mammalian, voltage-gated calcium channels (Cav). The sequence is that of Omega-hexatoxin-Asp2b from Atrax sp. (strain Illawarra) (Funnel-web spider).